The following is an 803-amino-acid chain: MAKRSSLYIRIVEGKNLPAKDITGSSDPYCIVKVDNEPIIRTATVWKTLCPFWGEEYQVHLPPTFHAVAFYVMDEDALSRDDVIGKVCLTRDTIASHPKGFSGWAHLTEVDPDEEVQGEIHLRLEVWPGARACRLRCSVLEARDLAPKDRNGTSDPFVRVRYKGRTRETSIVKKSCYPRWNETFEFELQEGAMEALCVEAWDWDLVSRNDFLGKVVIDVQRLRVVQQEEGWFRLQPDQSKSRRHDEGNLGSLQLEVRLRDETVLPSSYYQPLVHLLCHEVKLGMQGPGQLIPLIEETTSTECRQDVATNLLKLFLGQGLAKDFLDLLFQLELSRTSETNTLFRSNSLASKSVESFLKVAGMQYLHGVLGPIINKVFEEKKYVELDPSKVEVKDVGCSGLHRPQTEAEVLEQSAQTLRAHLGALLSALSRSVRACPAVVRATFRQLFRRVRERFPGAQHENVPFIAVTSFLCLRFFSPAIMSPKLFHLRERHADARTSRTLLLLAKAVQNVGNMDTPASRAKEAWMEPLQPTVHQGVAQLKDFITKLVDIEEKDELDLQRTLSLQAPPVKEGPLFIHRTKGKGPLMSSSFKKLYFSLTTEALSFAKTPSSKKSALIKLANIRAAEKVEEKSFGGSHVMQVIYTDDAGRPQTAYLQCKCVNELNQWLSALRKVSINNTGLLGSYHPGVFRGDKWSCCHQKEKTGQGCDKTRSRVTLQEWNDPLDHDLEAQLIYRHLLGVEAMLWERHRELSGGAEAGTVPTSPGKVPEDSLARLLRVLQDLREAHSSSPAGSPPSEPNCLLELQT.

C2 domains are found at residues 1–105 (MAKR…SGWA) and 116–232 (VQGE…EGWF). The Ca(2+) site is built by aspartate 21, aspartate 27, aspartate 74, aspartate 76, serine 79, aspartate 82, aspartate 149, aspartate 155, aspartate 202, aspartate 204, serine 207, and aspartate 210. The region spanning 318 to 546 (GLAKDFLDLL…AQLKDFITKL (229 aa)) is the Ras-GAP domain. The PH domain maps to 566–673 (PPVKEGPLFI…WLSALRKVSI (108 aa)). The Btk-type zinc finger occupies 675 to 711 (NTGLLGSYHPGVFRGDKWSCCHQKEKTGQGCDKTRSR). Residues histidine 683, cysteine 694, cysteine 695, and cysteine 705 each coordinate Zn(2+). The segment at 781–803 (EAHSSSPAGSPPSEPNCLLELQT) is disordered.

The cofactor is Ca(2+).

The protein resides in the cytoplasm. It localises to the cytosol. The protein localises to the cell membrane. Ca(2+)-dependent Ras GTPase-activating protein, that may play a role in the Ras-MAPK pathway. This Homo sapiens (Human) protein is Ras GTPase-activating protein 4B (RASA4B).